A 191-amino-acid polypeptide reads, in one-letter code: Fe/S biogenesis protein NfuA (191 aa).

[4Fe-4S] cluster contacts are provided by cysteine 149 and cysteine 152.

This sequence belongs to the NfuA family. In terms of assembly, homodimer. The cofactor is [4Fe-4S] cluster.

In terms of biological role, involved in iron-sulfur cluster biogenesis. Binds a 4Fe-4S cluster, can transfer this cluster to apoproteins, and thereby intervenes in the maturation of Fe/S proteins. Could also act as a scaffold/chaperone for damaged Fe/S proteins. The sequence is that of Fe/S biogenesis protein NfuA from Enterobacter sp. (strain 638).